The following is a 147-amino-acid chain: Hemoglobin subunit beta-2 (147 aa).

A Globin domain is found at histidine 3–asparagine 147. Residues histidine 64 and histidine 93 each coordinate heme b.

This sequence belongs to the globin family. Heterotetramer of two alpha chains and two beta chains. As to expression, red blood cells.

Its function is as follows. Involved in oxygen transport from the lung to the various peripheral tissues. The chain is Hemoglobin subunit beta-2 (hbb2) from Xenopus laevis (African clawed frog).